The following is a 319-amino-acid chain: Large ribosomal subunit protein uL10 (319 aa).

The interval Ala-286–Asp-319 is disordered. Over residues Pro-304–Asp-319 the composition is skewed to acidic residues.

The protein belongs to the universal ribosomal protein uL10 family. As to quaternary structure, P0 forms a pentameric complex by interaction with dimers of P1 and P2. In terms of processing, phosphorylated.

Functionally, ribosomal protein P0 is the functional equivalent of E.coli protein L10. The sequence is that of Large ribosomal subunit protein uL10 (RP-P0) from Zea mays (Maize).